A 64-amino-acid chain; its full sequence is Enteric beta-defensin (64 aa).

Positions 1–26 (MRLHHLLLTLLFLVLSAGSGFTQGIS) are cleaved as a signal peptide. 3 disulfides stabilise this stretch: C31-C60, C38-C53, and C43-C61.

This sequence belongs to the beta-defensin family. LAP/TAP subfamily. Inducibly expressed in enteric epithelial cells.

It localises to the secreted. Has antibacterial activity. The protein is Enteric beta-defensin (EBD) of Bos taurus (Bovine).